Reading from the N-terminus, the 298-residue chain is MKYLLDLILLLPLLIVFCIESFIKRLIPKKKKSVAGEIVLITGAGHGIGRLTAYEFAKLNTKLVLWDINKNGIEETAAKCRKLGAQVHPFVVDCSQREEIYSAVRKVKEEVGDVSILVNNAGVVYTADLFATQDPQIEKTFEVNVLAHFWTTKAFLPAMMKNNHGHVVTVASAAGHTVVPFLLAYCSSKFAAVGFHRALTDELAALGCTGVRTSCLCPNFINTGFIKNPSTNLGPTLEPEEVVEHLMHGILTNQKMIFVPGSIALLTVLERVFPERFLDVLKRRINVKFDAVVGYKDK.

The signal sequence occupies residues methionine 1–serine 21. Leucine 40 to valine 64 contacts NADP(+). Residue serine 172 coordinates substrate. The active-site Proton acceptor is tyrosine 185.

It belongs to the short-chain dehydrogenases/reductases (SDR) family. 17-beta-HSD 3 subfamily.

It localises to the endoplasmic reticulum. It is found in the lipid droplet. The catalysed reaction is 17beta-estradiol + NAD(+) = estrone + NADH + H(+). It catalyses the reaction 17beta-estradiol + NADP(+) = estrone + NADPH + H(+). Functionally, can convert androstan-3-alpha,17-beta-diol (3-alpha-diol) to androsterone in vitro, suggesting that it may participate in androgen metabolism during steroidogenesis. May act by metabolizing compounds that stimulate steroid synthesis and/or by generating metabolites that inhibit it. Has no activity toward DHEA (dehydroepiandrosterone), or A-dione (4-androste-3,17-dione), and only a slight activity toward testosterone to A-dione. The sequence is that of Estradiol 17-beta-dehydrogenase 11 (Hsd17b11) from Rattus norvegicus (Rat).